The sequence spans 558 residues: NAD(P)H-quinone oxidoreductase chain 4 (558 aa).

14 consecutive transmembrane segments (helical) span residues F25–I45, W56–G76, L111–F131, P133–V153, L157–W177, F189–F209, G230–V250, T264–L284, F298–F318, I327–S347, A353–A373, I395–V417, I438–M458, and I485–M505.

The protein belongs to the complex I subunit 4 family.

Its subcellular location is the cellular thylakoid membrane. The enzyme catalyses a plastoquinone + NADH + (n+1) H(+)(in) = a plastoquinol + NAD(+) + n H(+)(out). The catalysed reaction is a plastoquinone + NADPH + (n+1) H(+)(in) = a plastoquinol + NADP(+) + n H(+)(out). Its function is as follows. NDH-1 shuttles electrons from NAD(P)H, via FMN and iron-sulfur (Fe-S) centers, to quinones in the respiratory chain. The immediate electron acceptor for the enzyme in this species is believed to be plastoquinone. Couples the redox reaction to proton translocation (for every two electrons transferred, four hydrogen ions are translocated across the cytoplasmic membrane), and thus conserves the redox energy in a proton gradient. This is NAD(P)H-quinone oxidoreductase chain 4 from Prochlorococcus marinus (strain MIT 9211).